Consider the following 327-residue polypeptide: Ribonucleoside-diphosphate reductase small chain (327 aa).

Fe cation contacts are provided by Asp-70, Glu-101, and His-104. Tyr-108 is a catalytic residue. The Fe cation site is built by Glu-164, Glu-198, and His-201.

It belongs to the ribonucleoside diphosphate reductase small chain family. As to quaternary structure, heterotetramer composed of a homodimer of the large subunit (R1) and a homodimer of the small subunit (R2). Larger multisubunit protein complex are also active, composed of (R1)n(R2)n. The cofactor is Fe cation.

It carries out the reaction a 2'-deoxyribonucleoside 5'-diphosphate + [thioredoxin]-disulfide + H2O = a ribonucleoside 5'-diphosphate + [thioredoxin]-dithiol. Ribonucleoside-diphosphate reductase holoenzyme provides the precursors necessary for viral DNA synthesis. Allows virus growth in non-dividing cells. Catalyzes the biosynthesis of deoxyribonucleotides from the corresponding ribonucleotides. The chain is Ribonucleoside-diphosphate reductase small chain from African swine fever virus (isolate Tick/South Africa/Pretoriuskop Pr4/1996) (ASFV).